Consider the following 104-residue polypeptide: NADH-quinone oxidoreductase subunit K (104 aa).

3 consecutive transmembrane segments (helical) span residues 4–24 (VPLS…LYGA), 31–51 (VIVL…LVAF), and 64–84 (IFAL…LAIL).

It belongs to the complex I subunit 4L family. NDH-1 is composed of 14 different subunits. Subunits NuoA, H, J, K, L, M, N constitute the membrane sector of the complex.

It is found in the cell membrane. The enzyme catalyses a quinone + NADH + 5 H(+)(in) = a quinol + NAD(+) + 4 H(+)(out). In terms of biological role, NDH-1 shuttles electrons from NADH, via FMN and iron-sulfur (Fe-S) centers, to quinones in the respiratory chain. The immediate electron acceptor for the enzyme in this species is believed to be a menaquinone. Couples the redox reaction to proton translocation (for every two electrons transferred, four hydrogen ions are translocated across the cytoplasmic membrane), and thus conserves the redox energy in a proton gradient. In Geobacillus sp. (strain WCH70), this protein is NADH-quinone oxidoreductase subunit K.